Here is a 382-residue protein sequence, read N- to C-terminus: Proton extrusion protein PxcA (382 aa).

The next 4 helical transmembrane spans lie at 156–176, 257–277, 305–325, and 340–360; these read TLISLKVLLLLILVPLLVQQV, AVKNVIADLAATVAFVVVCVF, IILFTDIFVGFHSPEGWTVLL, and FILLFIATFPVILATIFKYWI.

The protein belongs to the CemA family.

The protein resides in the cell inner membrane. Required for H(+) efflux immediately after light irradiation to form a rapid H(+) concentration gradient across the thylakoid membranes. Together with PxcL, contributes to transient H(+) uptake following dark to light transition. In Synechococcus sp. (strain WH7803), this protein is Proton extrusion protein PxcA.